Here is a 429-residue protein sequence, read N- to C-terminus: 3-phosphoshikimate 1-carboxyvinyltransferase (429 aa).

3-phosphoshikimate is bound by residues K22, S23, and R27. K22 contacts phosphoenolpyruvate. Positions 94 and 122 each coordinate phosphoenolpyruvate. 3-phosphoshikimate contacts are provided by S167, Q169, D315, and K342. Position 169 (Q169) interacts with phosphoenolpyruvate. The active-site Proton acceptor is the D315. 2 residues coordinate phosphoenolpyruvate: R346 and R388.

It belongs to the EPSP synthase family. Monomer.

It localises to the cytoplasm. It catalyses the reaction 3-phosphoshikimate + phosphoenolpyruvate = 5-O-(1-carboxyvinyl)-3-phosphoshikimate + phosphate. The protein operates within metabolic intermediate biosynthesis; chorismate biosynthesis; chorismate from D-erythrose 4-phosphate and phosphoenolpyruvate: step 6/7. In terms of biological role, catalyzes the transfer of the enolpyruvyl moiety of phosphoenolpyruvate (PEP) to the 5-hydroxyl of shikimate-3-phosphate (S3P) to produce enolpyruvyl shikimate-3-phosphate and inorganic phosphate. This Geobacter sulfurreducens (strain ATCC 51573 / DSM 12127 / PCA) protein is 3-phosphoshikimate 1-carboxyvinyltransferase.